The following is a 369-amino-acid chain: Chorismate synthase (369 aa).

NADP(+)-binding residues include arginine 48 and arginine 54. Residues 125–127 (RSS), 238–239 (NA), glycine 283, 298–302 (KPTSS), and arginine 324 contribute to the FMN site.

This sequence belongs to the chorismate synthase family. As to quaternary structure, homotetramer. The cofactor is FMNH2.

It carries out the reaction 5-O-(1-carboxyvinyl)-3-phosphoshikimate = chorismate + phosphate. The protein operates within metabolic intermediate biosynthesis; chorismate biosynthesis; chorismate from D-erythrose 4-phosphate and phosphoenolpyruvate: step 7/7. Catalyzes the anti-1,4-elimination of the C-3 phosphate and the C-6 proR hydrogen from 5-enolpyruvylshikimate-3-phosphate (EPSP) to yield chorismate, which is the branch point compound that serves as the starting substrate for the three terminal pathways of aromatic amino acid biosynthesis. This reaction introduces a second double bond into the aromatic ring system. The protein is Chorismate synthase of Acidiphilium cryptum (strain JF-5).